The following is a 165-amino-acid chain: Protein AIG2 C (165 aa).

Residue 14–19 coordinates substrate; the sequence is YGSILE. E82 (proton acceptor) is an active-site residue.

It belongs to the gamma-glutamylcyclotransferase family. In terms of tissue distribution, expressed in floral organs, leaves, stems and roots.

Putative gamma-glutamylcyclotransferase. This chain is Protein AIG2 C, found in Arabidopsis thaliana (Mouse-ear cress).